Here is a 180-residue protein sequence, read N- to C-terminus: ATP-dependent protease subunit HslV (180 aa).

The active site involves Thr7. Positions 165, 168, and 171 each coordinate Na(+).

It belongs to the peptidase T1B family. HslV subfamily. In terms of assembly, a double ring-shaped homohexamer of HslV is capped on each side by a ring-shaped HslU homohexamer. The assembly of the HslU/HslV complex is dependent on binding of ATP.

It is found in the cytoplasm. The catalysed reaction is ATP-dependent cleavage of peptide bonds with broad specificity.. Its activity is regulated as follows. Allosterically activated by HslU binding. Its function is as follows. Protease subunit of a proteasome-like degradation complex believed to be a general protein degrading machinery. The sequence is that of ATP-dependent protease subunit HslV from Geobacillus kaustophilus (strain HTA426).